We begin with the raw amino-acid sequence, 427 residues long: Transcriptional enhancer factor TEF-3 (427 aa).

The interval 1–32 (MTSNEWSSPDSPEGSSISGGSQALDKPIDNDA) is disordered. Residues 7–21 (SSPDSPEGSSISGGS) show a composition bias toward low complexity. Positions 29–105 (DNDAEGVWSP…QVLARRKARE (77 aa)) form a DNA-binding region, TEA. Residues 78–94 (IKLRTGKTRTRKQVSSH) carry the Nuclear localization signal motif. Residues 163–206 (QPGTSHDVKPFSQNTYPVQPPLPLPGFESPAGPTPSPSAPLAPP) are disordered. The span at 194 to 205 (GPTPSPSAPLAP) shows a compositional bias: pro residues.

As to quaternary structure, interacts with WWTR1/TAZ. Interacts with YAP1. As to expression, preferentially expressed in lung and in skeletal muscle.

Its subcellular location is the nucleus. Transcription factor which plays a key role in the Hippo signaling pathway, a pathway involved in organ size control and tumor suppression by restricting proliferation and promoting apoptosis. The core of this pathway is composed of a kinase cascade wherein MST1/MST2, in complex with its regulatory protein SAV1, phosphorylates and activates LATS1/2 in complex with its regulatory protein MOB1, which in turn phosphorylates and inactivates YAP1 oncoprotein and WWTR1/TAZ. Acts by mediating gene expression of YAP1 and WWTR1/TAZ, thereby regulating cell proliferation, migration and epithelial mesenchymal transition (EMT) induction. Binds specifically and non-cooperatively to the Sph and GT-IIC 'enhansons' (5'-GTGGAATGT-3') and activates transcription. Binds to the M-CAT motif. Might play a role in the embryonic development of skeletal muscle. The protein is Transcriptional enhancer factor TEF-3 (Tead4) of Mus musculus (Mouse).